Consider the following 435-residue polypeptide: Putative dimethyl sulfoxide reductase membrane subunit C (435 aa).

11 consecutive transmembrane segments (helical) span residues 22–42, 57–77, 95–115, 135–155, 186–206, 220–240, 257–277, 281–301, 304–324, 333–353, and 392–412; these read GWLG…AYQL, WGLY…GLIL, LGVL…LPDI, VWDF…LWLL, FWTA…TGWI, LVAP…LLVV, LTSL…YLLA, LPHA…FLIG, VYFW…LATP, IFTA…RLVF, and VEIA…MAGL.

This sequence belongs to the NrfD family. As to quaternary structure, probable multiprotein complex that likely consists of DmsA, DmsB and DmsC.

The protein resides in the cell membrane. In terms of biological role, dimethyl sulfoxide (DMSO) reductase catalyzes the reduction of dimethyl sulfoxide (DMSO) to dimethyl sulfide (DMS) during anaerobic respiration; it can also use trimethylamine N-oxide (TMAO) as terminal electron acceptor. Subunit C is proposed to be a membrane anchoring subunit. In Halobacterium salinarum (strain ATCC 700922 / JCM 11081 / NRC-1) (Halobacterium halobium), this protein is Putative dimethyl sulfoxide reductase membrane subunit C (dmsC).